Reading from the N-terminus, the 1225-residue chain is Mediator of RNA polymerase II transcription subunit 13 (1225 aa).

Belongs to the Mediator complex subunit 13 family. In terms of assembly, component of the srb8-11 complex which consists of rb8, srb9(TRAP240), srb10 and srb11. The srb8-11 complex associates with the Mediator complex thereby blocking association with RNA polymerase II and leading to reduced transcriptional activation by Mediator.

Its subcellular location is the nucleus. Functionally, component of the srb8-11 complex. The srb8-11 complex is a regulatory module of the Mediator complex which is itself involved in regulation of basal and activated RNA polymerase II-dependent transcription. The srb8-11 complex may be involved in the transcriptional repression of a subset of genes regulated by Mediator. It may inhibit the association of the Mediator complex with RNA polymerase II to form the holoenzyme complex. This is Mediator of RNA polymerase II transcription subunit 13 (srb9) from Schizosaccharomyces pombe (strain 972 / ATCC 24843) (Fission yeast).